The following is a 243-amino-acid chain: Probable transcriptional regulatory protein BG0025 (243 aa).

The protein belongs to the TACO1 family.

It localises to the cytoplasm. This is Probable transcriptional regulatory protein BG0025 from Borrelia garinii subsp. bavariensis (strain ATCC BAA-2496 / DSM 23469 / PBi) (Borreliella bavariensis).